Here is a 61-residue protein sequence, read N- to C-terminus: Arabinogalactan protein 15 (61 aa).

Residues 1 to 22 (MAISKASIVVLMMVIISVVASA) form the signal peptide. Pyrrolidone carboxylic acid is present on Gln23. 3 positions are modified to 4-hydroxyproline: Pro27, Pro29, and Pro31. O-linked (Ara...) hydroxyproline glycosylation is found at Pro27, Pro29, and Pro31. The GPI-anchor amidated serine moiety is linked to residue Ser35. Positions 36–61 (SAISASFVSAGVAAVAALVFGSALRI) are cleaved as a propeptide — removed in mature form.

It belongs to the AG-peptide AGP family. Post-translationally, contains 4-hydroxyproline; hydroxylated on Pro-27, Pro-29 and Pro-31. O-glycosylated on hydroxyprolines; noncontiguous hydroxylproline residues are glycosylated with arabinogalactan. In terms of tissue distribution, expressed in reproductive tissues. Expressed in chalaza, funiculus, stigma, septum, style, integument and transmitting tract.

It localises to the cell membrane. Functionally, proteoglycan that seems to be implicated in diverse developmental roles such as differentiation, cell-cell recognition, embryogenesis and programmed cell death. This Arabidopsis thaliana (Mouse-ear cress) protein is Arabinogalactan protein 15.